Reading from the N-terminus, the 265-residue chain is Hydroxyacylglutathione hydrolase (265 aa).

The Zn(2+) site is built by His-53, His-55, Asp-57, His-58, His-109, Asp-126, and His-164.

This sequence belongs to the metallo-beta-lactamase superfamily. Glyoxalase II family. Monomer. It depends on Zn(2+) as a cofactor.

The catalysed reaction is an S-(2-hydroxyacyl)glutathione + H2O = a 2-hydroxy carboxylate + glutathione + H(+). The protein operates within secondary metabolite metabolism; methylglyoxal degradation; (R)-lactate from methylglyoxal: step 2/2. Thiolesterase that catalyzes the hydrolysis of S-D-lactoyl-glutathione to form glutathione and D-lactic acid. In Dechloromonas aromatica (strain RCB), this protein is Hydroxyacylglutathione hydrolase.